A 128-amino-acid polypeptide reads, in one-letter code: MDLELLQDLSKFNFPTPIKIRSKTSKTKKDEGDDDEDDLRCSTPTSQEHKIPAVVDSPPPPPRKPRPPPSAPSATAALMIRSCKRKLLVSTCEIIMNREEIDRFFSSVYNETSTTAKRRRSYPYCSRR.

Positions 17-74 (PIKIRSKTSKTKKDEGDDDEDDLRCSTPTSQEHKIPAVVDSPPPPPRKPRPPPSAPSA) are disordered. The span at 57 to 71 (SPPPPPRKPRPPPSA) shows a compositional bias: pro residues.

As to quaternary structure, interacts with CDKB1-1. Interacts with CPR5. As to expression, expressed in roots, leaves, stems, siliques and flowers. Expressed in the root elongation zone.

It is found in the nucleus. In terms of biological role, probable cyclin-dependent protein kinase (CDK) inhibitor that functions as a repressor of mitosis in the endoreduplication cell cycle. Cooperates with SIM and SMR2 to promote endoreplication during leaf development. Specifically regulates endoreduplication in epidermal pavement cells to produce the cell size pattern. Is necessary for giant cell formation. Positive regulator of effector-triggered immunity (ETI). This chain is Cyclin-dependent protein kinase inhibitor SMR1, found in Arabidopsis thaliana (Mouse-ear cress).